An 83-amino-acid polypeptide reads, in one-letter code: Large ribosomal subunit protein bL27 (83 aa).

This sequence belongs to the bacterial ribosomal protein bL27 family.

The sequence is that of Large ribosomal subunit protein bL27 from Treponema denticola (strain ATCC 35405 / DSM 14222 / CIP 103919 / JCM 8153 / KCTC 15104).